Consider the following 491-residue polypeptide: Protein phosphatase ppm-1.G (491 aa).

In terms of domain architecture, PPM-type phosphatase spans 23–486; that stretch reads SYACTTMQGW…DNMTVICTTF (464 aa). Residues Asp-57 and Gly-58 each coordinate Mn(2+). The segment covering 112–125 has biased composition (basic and acidic residues); sequence KDIGDEGKPKKAGG. Disordered stretches follow at residues 112–136 and 170–294; these read KDIG…ADRI and GDVS…EEMV. Acidic residues-rich tracts occupy residues 173 to 192 and 260 to 294; these read SDDS…QDDT and ATEE…EEMV. The Mn(2+) site is built by Asp-428 and Asp-477.

This sequence belongs to the PP2C family. Mg(2+) serves as cofactor. Requires Mn(2+) as cofactor.

The catalysed reaction is O-phospho-L-seryl-[protein] + H2O = L-seryl-[protein] + phosphate. It catalyses the reaction O-phospho-L-threonyl-[protein] + H2O = L-threonyl-[protein] + phosphate. This chain is Protein phosphatase ppm-1.G, found in Caenorhabditis elegans.